Here is a 284-residue protein sequence, read N- to C-terminus: Homeobox protein six1 (284 aa).

A DNA-binding region (homeobox) is located at residues 124-183 (GEETSYCFKEKSRGVLREWYAHNPYPSPREKRELAEATGLTTTQVSNWFKNRRQRDRAAE). Positions 168–230 (VSNWFKNRRQ…SPPQSPDQNS (63 aa)) are disordered. A compositionally biased stretch (basic and acidic residues) spans 179 to 190 (DRAAEAKERENT). Low complexity predominate over residues 191–202 (ENNNTSTNKQNQ).

The protein belongs to the SIX/Sine oculis homeobox family.

It localises to the nucleus. The protein localises to the cytoplasm. Transcription factor that is involved in the regulation of cell proliferation, apoptosis and embryonic development. Depending on context, functions as a transcriptional repressor or activator. Required for the normal formation of pre-placodal ectoderm. This is Homeobox protein six1 (six1) from Xenopus laevis (African clawed frog).